Consider the following 219-residue polypeptide: 7-cyano-7-deazaguanine synthase (219 aa).

Residue 10 to 20 (FSGGQDSTTCL) coordinates ATP. Residues Cys-186, Cys-195, Cys-198, and Cys-201 each contribute to the Zn(2+) site.

The protein belongs to the QueC family. As to quaternary structure, homodimer. Requires Zn(2+) as cofactor.

It carries out the reaction 7-carboxy-7-deazaguanine + NH4(+) + ATP = 7-cyano-7-deazaguanine + ADP + phosphate + H2O + H(+). The protein operates within purine metabolism; 7-cyano-7-deazaguanine biosynthesis. Its function is as follows. Catalyzes the ATP-dependent conversion of 7-carboxy-7-deazaguanine (CDG) to 7-cyano-7-deazaguanine (preQ(0)). The polypeptide is 7-cyano-7-deazaguanine synthase (Bacillus velezensis (strain DSM 23117 / BGSC 10A6 / LMG 26770 / FZB42) (Bacillus amyloliquefaciens subsp. plantarum)).